Consider the following 32-residue polypeptide: Conotoxin pr6b (32 aa).

P6, P13, P20, and P29 each carry 4-hydroxyproline. Disulfide bonds link C7–C18, C14–C23, and C17–C31.

As to expression, expressed by the venom duct.

It is found in the secreted. Its function is as follows. Intraperitoneal injection into fish (0.5 nmol) provokes vertical suspension and paralysis after 6 minutes. In Conus parius (Cone snail), this protein is Conotoxin pr6b.